A 24-amino-acid chain; its full sequence is Brevinin-1HSa (24 aa).

An intrachain disulfide couples C18 to C24.

Expressed by the skin glands.

The protein resides in the secreted. Its function is as follows. Has antibacterial activity against the Gram-positive bacterium S.aureus ATCC 25923 (MIC=3 uM) and the Gram-negative bacterium E.coli ATCC 25726 (MIC=24 uM). In Odorrana hosii (Hose's rock frog), this protein is Brevinin-1HSa.